The primary structure comprises 254 residues: Alcohol dehydrogenase 1 (254 aa).

10–33 is an NAD(+) binding site; that stretch reads FVAGLGGIGFDTSREIVKSGPKNL. Residue Ser-138 participates in substrate binding. Tyr-151 serves as the catalytic Proton acceptor.

The protein belongs to the short-chain dehydrogenases/reductases (SDR) family. In terms of assembly, homodimer.

It catalyses the reaction a primary alcohol + NAD(+) = an aldehyde + NADH + H(+). The catalysed reaction is a secondary alcohol + NAD(+) = a ketone + NADH + H(+). The sequence is that of Alcohol dehydrogenase 1 (Adh1) from Drosophila mulleri (Fruit fly).